Here is a 167-residue protein sequence, read N- to C-terminus: ATP synthase subunit delta, mitochondrial (167 aa).

The N-terminal 28 residues, 1–28, are a transit peptide targeting the mitochondrion; that stretch reads MFRLSNYMLRKSQFPQGLVRAPFGIRGY.

It belongs to the ATPase epsilon chain family. As to quaternary structure, F-type ATPases have 2 components, CF(1) - the catalytic core - and CF(0) - the membrane proton channel. CF(1) has five subunits: alpha(3), beta(3), gamma(1), delta(1), epsilon(1). CF(0) has three main subunits: a, b and c.

Its subcellular location is the mitochondrion. The protein localises to the mitochondrion inner membrane. In terms of biological role, mitochondrial membrane ATP synthase (F(1)F(0) ATP synthase or Complex V) produces ATP from ADP in the presence of a proton gradient across the membrane which is generated by electron transport complexes of the respiratory chain. F-type ATPases consist of two structural domains, F(1) - containing the extramembraneous catalytic core, and F(0) - containing the membrane proton channel, linked together by a central stalk and a peripheral stalk. During catalysis, ATP turnover in the catalytic domain of F(1) is coupled via a rotary mechanism of the central stalk subunits to proton translocation. Part of the complex F(1) domain and of the central stalk which is part of the complex rotary element. Rotation of the central stalk against the surrounding alpha(3)beta(3) subunits leads to hydrolysis of ATP in three separate catalytic sites on the beta subunits. This Schizosaccharomyces pombe (strain 972 / ATCC 24843) (Fission yeast) protein is ATP synthase subunit delta, mitochondrial (atp16).